Reading from the N-terminus, the 141-residue chain is Acetyltransferase YpeA (141 aa).

The N-acetyltransferase domain occupies 1–141; the sequence is MEIRVFRQED…GKRLIEDEEY (141 aa).

It belongs to the acetyltransferase family. YpeA subfamily.

This Shigella boydii serotype 4 (strain Sb227) protein is Acetyltransferase YpeA.